A 77-amino-acid polypeptide reads, in one-letter code: Liver-expressed antimicrobial peptide 2 (77 aa).

The signal sequence occupies residues 1–22 (MWHLKLFAVLVICLLLAVQVHG). A propeptide spanning residues 23–37 (SPIPELSSAKRRPRR) is cleaved from the precursor. Cystine bridges form between Cys-54–Cys-65 and Cys-60–Cys-70.

The protein belongs to the LEAP2 family.

It is found in the secreted. Its function is as follows. Has an antimicrobial activity. This Sus scrofa (Pig) protein is Liver-expressed antimicrobial peptide 2 (LEAP2).